Here is a 377-residue protein sequence, read N- to C-terminus: DNA primase small subunit PriS (377 aa).

Residues D99, D101, and D274 contribute to the active site.

The protein belongs to the eukaryotic-type primase small subunit family. In terms of assembly, heterodimer of a small subunit (PriS) and a large subunit (PriL). It depends on Mg(2+) as a cofactor. The cofactor is Mn(2+).

In terms of biological role, catalytic subunit of DNA primase, an RNA polymerase that catalyzes the synthesis of short RNA molecules used as primers for DNA polymerase during DNA replication. The small subunit contains the primase catalytic core and has DNA synthesis activity on its own. Binding to the large subunit stabilizes and modulates the activity, increasing the rate of DNA synthesis while decreasing the length of the DNA fragments, and conferring RNA synthesis capability. The DNA polymerase activity may enable DNA primase to also catalyze primer extension after primer synthesis. May also play a role in DNA repair. This chain is DNA primase small subunit PriS, found in Staphylothermus marinus (strain ATCC 43588 / DSM 3639 / JCM 9404 / F1).